Consider the following 683-residue polypeptide: Amphiphysin (683 aa).

Coiled coils occupy residues 10 to 83 (AKNV…SLHE) and 144 to 191 (DYDS…QEEL). Residues 24–240 (VLQKLGKADE…MTKLGDQHAD (217 aa)) enclose the BAR domain. Disordered regions lie at residues 244–311 (SIQG…KVTP), 421–443 (AETEQALPTEPQAEEPPTTAAAP), and 455–599 (EPKE…ASLS). A Phosphoserine modification is found at S252. At T260 the chain carries Phosphothreonine. Residues 261-274 (PSPPEEASPLPSPT) show a composition bias toward pro residues. Phosphoserine is present on residues S262, S268, S272, and S276. T280 carries the post-translational modification Phosphothreonine. Low complexity-rich tracts occupy residues 424–443 (EQALPTEPQAEEPPTTAAAP) and 468–477 (AGETVGTEGS). S496 carries the phosphoserine modification. Residues 539 to 559 (SNHEGEEHQETTTGTETREAT) are compositionally biased toward basic and acidic residues. A compositionally biased stretch (low complexity) spans 585-596 (AATPAPAGAVDA). In terms of domain architecture, SH3 spans 610–683 (GFLYKVETLH…FPENFTRHLE (74 aa)). Phosphoserine is present on S626.

In terms of assembly, heterodimer with BIN1. Binds SH3GLB1. Interacts with REPS1 and SGIP1. Binds AP2A2. Interacts with AP2B1. Interacts with DNM1 and SYNJ1.

It is found in the cytoplasmic vesicle. Its subcellular location is the secretory vesicle. The protein resides in the synaptic vesicle membrane. The protein localises to the cytoplasm. It localises to the cytoskeleton. May participate in mechanisms of regulated exocytosis in synapses and certain endocrine cell types. May control the properties of the membrane associated cytoskeleton. The polypeptide is Amphiphysin (Amph) (Rattus norvegicus (Rat)).